The following is a 367-amino-acid chain: Putrescine/agmatine-binding protein (367 aa).

A signal peptide spans 1–19 (MKKVCALALSILTTIGATA).

The protein belongs to the bacterial solute-binding protein 1 family.

The protein resides in the periplasm. In terms of biological role, binds putrescine and agmatine. This Pseudomonas aeruginosa (strain ATCC 15692 / DSM 22644 / CIP 104116 / JCM 14847 / LMG 12228 / 1C / PRS 101 / PAO1) protein is Putrescine/agmatine-binding protein.